A 348-amino-acid polypeptide reads, in one-letter code: Protein pof5 (348 aa).

The protein to yeast YDR306C. As to quaternary structure, interacts with skp1.

It is found in the mitochondrion. The protein is Protein pof5 (pof5) of Schizosaccharomyces pombe (strain 972 / ATCC 24843) (Fission yeast).